The following is a 277-amino-acid chain: Exosome complex component Rrp42 (277 aa).

It belongs to the RNase PH family. Rrp42 subfamily. Component of the archaeal exosome complex. Forms a hexameric ring-like arrangement composed of 3 Rrp41-Rrp42 heterodimers. The hexameric ring associates with a trimer of Rrp4 and/or Csl4 subunits.

It localises to the cytoplasm. Functionally, non-catalytic component of the exosome, which is a complex involved in RNA degradation. Contributes to the structuring of the Rrp41 active site. In Pyrococcus furiosus (strain ATCC 43587 / DSM 3638 / JCM 8422 / Vc1), this protein is Exosome complex component Rrp42.